Reading from the N-terminus, the 376-residue chain is Probable dual-specificity RNA methyltransferase RlmN (376 aa).

Positions 1–25 are disordered; sequence MSDSERTSLPLVFDEPRGRKKPPRH. E113 functions as the Proton acceptor in the catalytic mechanism. The Radical SAM core domain occupies 119–362; sequence YPDRATMCVS…PTTVRDTRGR (244 aa). C126 and C368 are joined by a disulfide. The [4Fe-4S] cluster site is built by C133, C137, and C140. Residues 188–189, S222, 245–247, and N325 each bind S-adenosyl-L-methionine; these read GE and SLH. The active-site S-methylcysteine intermediate is the C368.

It belongs to the radical SAM superfamily. RlmN family. The cofactor is [4Fe-4S] cluster.

It is found in the cytoplasm. It carries out the reaction adenosine(2503) in 23S rRNA + 2 reduced [2Fe-2S]-[ferredoxin] + 2 S-adenosyl-L-methionine = 2-methyladenosine(2503) in 23S rRNA + 5'-deoxyadenosine + L-methionine + 2 oxidized [2Fe-2S]-[ferredoxin] + S-adenosyl-L-homocysteine. It catalyses the reaction adenosine(37) in tRNA + 2 reduced [2Fe-2S]-[ferredoxin] + 2 S-adenosyl-L-methionine = 2-methyladenosine(37) in tRNA + 5'-deoxyadenosine + L-methionine + 2 oxidized [2Fe-2S]-[ferredoxin] + S-adenosyl-L-homocysteine. In terms of biological role, specifically methylates position 2 of adenine 2503 in 23S rRNA and position 2 of adenine 37 in tRNAs. The sequence is that of Probable dual-specificity RNA methyltransferase RlmN from Nocardioides sp. (strain ATCC BAA-499 / JS614).